Consider the following 326-residue polypeptide: Dolichyl-phosphate beta-glucosyltransferase (326 aa).

Residues 1 to 7 (MWTCLCQ) lie on the Lumenal side of the membrane. Residues 8-28 (LCFYLLSTLAVAALSIAALVL) traverse the membrane as a helical segment. Over 29-326 (YKTKPYPNIK…RIASIQKKEK (298 aa)) the chain is Cytoplasmic.

The protein belongs to the glycosyltransferase 2 family.

It is found in the endoplasmic reticulum membrane. The catalysed reaction is a di-trans,poly-cis-dolichyl phosphate + UDP-alpha-D-glucose = a di-trans,poly-cis-dolichyl beta-D-glucosyl phosphate + UDP. It participates in protein modification; protein glycosylation. In terms of biological role, required for normal production of N-glycosylated proteins in the endoplasmic reticulum (ER). Required for embryonic segmentation, dorsal-ventral patterning and gastrulation. Required for chitin orientation and shaping of the apical and lateral plasma membranes of epidermal cells during cuticle differentiation. Also required for correctly shaping apical membrane topology of the epithelia of other organs such as the midgut and the hindgut. In Drosophila melanogaster (Fruit fly), this protein is Dolichyl-phosphate beta-glucosyltransferase (wol).